Here is a 502-residue protein sequence, read N- to C-terminus: UPF0371 protein CLL_A2797 (502 aa).

It belongs to the UPF0371 family.

This chain is UPF0371 protein CLL_A2797, found in Clostridium botulinum (strain Eklund 17B / Type B).